The primary structure comprises 121 residues: Large ribosomal subunit protein P2 (121 aa).

Positions 72–99 (VAVPSGGAPAAATAAAEAPKGGDKAAAP) are enriched in low complexity. Residues 72–121 (VAVPSGGAPAAATAAAEAPKGGDKAAAPPKEEKKEESEESDADMGFSPFD) form a disordered region.

It belongs to the eukaryotic ribosomal protein P1/P2 family. P1 and P2 exist as dimers at the large ribosomal subunit. Phosphorylated.

Plays an important role in the elongation step of protein synthesis. This is Large ribosomal subunit protein P2 from Taenia solium (Pork tapeworm).